Consider the following 272-residue polypeptide: Shikimate dehydrogenase (NADP(+)) (272 aa).

Residues 14-16 (SKS) and threonine 61 contribute to the shikimate site. Residue lysine 65 is the Proton acceptor of the active site. Glutamate 77 is an NADP(+) binding site. Residues asparagine 86 and aspartate 102 each contribute to the shikimate site. NADP(+)-binding positions include 126 to 130 (GAGGA), 149 to 154 (NRTASR), and methionine 213. Tyrosine 215 is a shikimate binding site. Position 237 (glycine 237) interacts with NADP(+).

Belongs to the shikimate dehydrogenase family. As to quaternary structure, homodimer.

It catalyses the reaction shikimate + NADP(+) = 3-dehydroshikimate + NADPH + H(+). It participates in metabolic intermediate biosynthesis; chorismate biosynthesis; chorismate from D-erythrose 4-phosphate and phosphoenolpyruvate: step 4/7. Involved in the biosynthesis of the chorismate, which leads to the biosynthesis of aromatic amino acids. Catalyzes the reversible NADPH linked reduction of 3-dehydroshikimate (DHSA) to yield shikimate (SA). The chain is Shikimate dehydrogenase (NADP(+)) from Salmonella typhimurium (strain LT2 / SGSC1412 / ATCC 700720).